Consider the following 104-residue polypeptide: Large ribosomal subunit protein uL24 (104 aa).

It belongs to the universal ribosomal protein uL24 family. In terms of assembly, part of the 50S ribosomal subunit.

In terms of biological role, one of two assembly initiator proteins, it binds directly to the 5'-end of the 23S rRNA, where it nucleates assembly of the 50S subunit. Functionally, one of the proteins that surrounds the polypeptide exit tunnel on the outside of the subunit. The sequence is that of Large ribosomal subunit protein uL24 from Methylorubrum populi (strain ATCC BAA-705 / NCIMB 13946 / BJ001) (Methylobacterium populi).